Here is a 96-residue protein sequence, read N- to C-terminus: MVVKIRLARHGVRNRPFYHIVVANAWKAPQAKPIETIGTFDPIPKKIDSQDSIPRIKDIQLNVERFKYWISVGAQPSDTVRSLAEKFQLLPKKPVS.

Belongs to the bacterial ribosomal protein bS16 family. Component of the mitochondrial small ribosomal subunit (mt-SSU). Mature yeast 74S mitochondrial ribosomes consist of a small (37S) and a large (54S) subunit. The 37S small subunit contains a 15S ribosomal RNA (15S mt-rRNA) and at least 32 different proteins. The 54S large subunit contains a 21S rRNA (21S mt-rRNA) and at least 45 different proteins.

The protein localises to the mitochondrion. Functionally, component of the mitochondrial ribosome (mitoribosome), a dedicated translation machinery responsible for the synthesis of mitochondrial genome-encoded proteins, including at least some of the essential transmembrane subunits of the mitochondrial respiratory chain. The mitoribosomes are attached to the mitochondrial inner membrane and translation products are cotranslationally integrated into the membrane. In Schizosaccharomyces pombe (strain 972 / ATCC 24843) (Fission yeast), this protein is Small ribosomal subunit protein bS16m (mrps16).